The primary structure comprises 228 residues: N-acetyltransferase family 8 member 3 (228 aa).

2 helical membrane-spanning segments follow: residues 36–56 (MLLL…LFLA) and 58–78 (GSWL…WLLA). The 157-residue stretch at 61–217 (LLVLLSTLTL…RNSPMICLKY (157 aa)) folds into the N-acetyltransferase domain.

It belongs to the camello family.

It localises to the nucleus membrane. Its subcellular location is the cytoplasm. The protein resides in the perinuclear region. The catalysed reaction is L-lysyl-[protein] + acetyl-CoA = N(6)-acetyl-L-lysyl-[protein] + CoA + H(+). Its function is as follows. Has histone acetyltransferase activity in vitro, with specificity for histone H4. The chain is N-acetyltransferase family 8 member 3 from Rattus norvegicus (Rat).